Reading from the N-terminus, the 2453-residue chain is Tyrosine-protein phosphatase non-receptor type 13 (2453 aa).

A KIND domain is found at 3 to 190; the sequence is VSLAEALEVR…SGTDPLSRSS (188 aa). A disordered region spans residues 183 to 227; it reads TDPLSRSSEQKPDRSQAIRDRLRGKGLPTGRSSTSDALDTHEAPL. The segment covering 190–205 has biased composition (basic and acidic residues); the sequence is SEQKPDRSQAIRDRLR. Ser240 is modified (phosphoserine). The disordered stretch occupies residues 253-285; it reads EDYLKDTPSDNNSRHEDSETFSSPYQFKTSTPQ. Basic and acidic residues predominate over residues 256 to 270; that stretch reads LKDTPSDNNSRHEDS. A compositionally biased stretch (polar residues) spans 272-285; sequence TFSSPYQFKTSTPQ. Ser297 and Ser298 each carry phosphoserine. A disordered region spans residues 429–457; sequence SEASKRFESSSGLPGVDETGQTRPSRQYE. A compositionally biased stretch (polar residues) spans 447-457; the sequence is TGQTRPSRQYE. Positions 458–493 form a coiled coil; sequence TSLEGNLINQDIMLRRQEEEMMQLQARMALRQSRLS. The FERM domain occupies 565–865; that stretch reads RKVNIRLLSG…SQHKFQLQMR (301 aa). Residues Ser883, Ser890, Ser901, Ser904, and Ser907 each carry the phosphoserine modification. A compositionally biased stretch (basic and acidic residues) spans 944-957; the sequence is KEKTDKASWEEKPR. Disordered stretches follow at residues 944–966 and 1007–1063; these read KEKTDKASWEEKPRGMSKSYHDL and LAGL…VPFK. Phosphoserine is present on residues Ser1021 and Ser1025. Residues 1025–1034 show a composition bias toward basic and acidic residues; the sequence is SPERRNHESD. A compositionally biased stretch (low complexity) spans 1049 to 1058; the sequence is SLPSSGKSSS. Ser1076 is subject to Phosphoserine. Residues 1084 to 1170 enclose the PDZ 1 domain; it reads LVNLKKDPKH…DVTLVISQPK (87 aa). 2 disordered regions span residues 1199–1356 and 1441–1478; these read DSAM…GDTF and GQVPTSRERDPAGPQSPPPDQDAQRQAPEKVAKQTPHV. Phosphoserine is present on Ser1221. 2 stretches are compositionally biased toward polar residues: residues 1242 to 1252 and 1267 to 1279; these read ESASLSQSQVN and PQHSSPSPSVTTK. Ser1270 carries the phosphoserine modification. The span at 1297–1315 shows a compositional bias: basic and acidic residues; the sequence is GISDLIEHLDCADSDKDDS. The segment covering 1331–1341 has biased composition (low complexity); it reads SSSLSTSNKTS. In terms of domain architecture, PDZ 2 spans 1357–1442; the sequence is EVELAKTDGS…VVHLLLEKGQ (86 aa). The span at 1467-1478 shows a compositional bias: basic and acidic residues; the sequence is APEKVAKQTPHV. The PDZ 3 domain occupies 1491-1579; that stretch reads EVKLFKNSSG…EVSLLLCRPA (89 aa). The span at 1602-1629 shows a compositional bias: polar residues; that stretch reads LNSSKETSQPSSSVEQGASSDDNGVSGK. 2 disordered regions span residues 1602–1662 and 1695–1726; these read LNSS…AKMP and KLESESSHPPPLDVSPGQTCQPPAECAPSDAT. A compositionally biased stretch (basic and acidic residues) spans 1638–1655; it reads SRRESYSDHSESGEDDSV. 2 PDZ domains span residues 1764–1845 and 1857–1942; these read LITL…GRIL and LPDI…TRDG. 2 disordered regions span residues 1991-2024 and 2051-2139; these read EAVCPAGEGSSSQMKESAGLTETKESNSRDDDIY and RHAT…DPPF. Positions 2012-2021 are enriched in basic and acidic residues; that stretch reads ETKESNSRDD. The Tyrosine-protein phosphatase domain maps to 2180-2434; it reads PSKELENLQE…VFCYQVILYV (255 aa). Substrate contacts are provided by residues Asp2345, 2375–2381, and Gln2419; that span reads CSAGIGR. The Phosphocysteine intermediate role is filled by Cys2375.

The protein belongs to the protein-tyrosine phosphatase family. Non-receptor class subfamily. Interacts (via the first PDZ domain) with PLEKHA1 and PLEKHA2. Interacts (via the second PDZ domain) with TNFRSF6 (Fas receptor) (via C-terminus). Interacts (via the second PDZ domain) with TRIP6 (via the third LIM domain and C-terminus). Interacts (via the third PDZ domain) with NGFR (via C-terminal SVP motif) and PKN2 (via C-terminus). Interacts (via the second or fourth PDZ domains) with PDLIM4 (via C-terminus only or via combined C-terminus and LIM domain, but not LIM domain only). Found in a complex with PDLIM4 and TRIP6. Interacts with PDLIM4; this interaction results in dephosphorylation of SRC 'Tyr-419' by this protein leading to its inactivation. Interacts with BRD7. Interacts with RAPGEF6. Interacts with ARHGAP29. Interacts with PIK3R2; dephosphorylates PIK3R2. Interacts with FBXL2. Interacts (via the FERM domain) with ENTR1. Found in a complex with ENTR1, PTPN13 and GIT1. In terms of tissue distribution, expressed predominantly in kidney and, to a lesser extent, in lung, heart, brain and testis.

The protein resides in the cytoplasm. It is found in the cytoskeleton. Its subcellular location is the nucleus. The protein localises to the cell projection. It localises to the lamellipodium. The catalysed reaction is O-phospho-L-tyrosyl-[protein] + H2O = L-tyrosyl-[protein] + phosphate. Its function is as follows. Tyrosine phosphatase which negatively regulates FAS-induced apoptosis and NGFR-mediated pro-apoptotic signaling. May regulate phosphoinositide 3-kinase (PI3K) signaling through dephosphorylation of PIK3R2. The chain is Tyrosine-protein phosphatase non-receptor type 13 (Ptpn13) from Mus musculus (Mouse).